Reading from the N-terminus, the 519-residue chain is 3-octaprenyl-4-hydroxybenzoate carboxy-lyase (519 aa).

A Mn(2+)-binding site is contributed by Asn-177. Prenylated FMN contacts are provided by residues 180–182 (IYR), 194–196 (RWL), and 199–200 (RG). Position 243 (Glu-243) interacts with Mn(2+). The active-site Proton donor is Asp-318.

This sequence belongs to the UbiD family. In terms of assembly, homohexamer. The cofactor is prenylated FMN. Mn(2+) serves as cofactor.

The protein localises to the cell membrane. It catalyses the reaction a 4-hydroxy-3-(all-trans-polyprenyl)benzoate + H(+) = a 2-(all-trans-polyprenyl)phenol + CO2. It functions in the pathway cofactor biosynthesis; ubiquinone biosynthesis. Functionally, catalyzes the decarboxylation of 3-octaprenyl-4-hydroxy benzoate to 2-octaprenylphenol, an intermediate step in ubiquinone biosynthesis. The sequence is that of 3-octaprenyl-4-hydroxybenzoate carboxy-lyase from Burkholderia thailandensis (strain ATCC 700388 / DSM 13276 / CCUG 48851 / CIP 106301 / E264).